The sequence spans 457 residues: Cysteine--tRNA ligase (457 aa).

Residue Cys-27 participates in Zn(2+) binding. Positions 29–39 (PTVYDFAHIGN) match the 'HIGH' region motif. Zn(2+)-binding residues include Cys-211, His-236, and Glu-240. A 'KMSKS' region motif is present at residues 269-273 (KMSKS). Residue Lys-272 participates in ATP binding.

The protein belongs to the class-I aminoacyl-tRNA synthetase family. In terms of assembly, monomer. Zn(2+) serves as cofactor.

The protein localises to the cytoplasm. The enzyme catalyses tRNA(Cys) + L-cysteine + ATP = L-cysteinyl-tRNA(Cys) + AMP + diphosphate. This Ehrlichia ruminantium (strain Welgevonden) protein is Cysteine--tRNA ligase.